The chain runs to 300 residues: tRNA pseudouridine synthase B (300 aa).

Asp38 functions as the Nucleophile in the catalytic mechanism.

Belongs to the pseudouridine synthase TruB family. Type 1 subfamily.

The catalysed reaction is uridine(55) in tRNA = pseudouridine(55) in tRNA. Its function is as follows. Responsible for synthesis of pseudouridine from uracil-55 in the psi GC loop of transfer RNAs. The protein is tRNA pseudouridine synthase B of Dehalococcoides mccartyi (strain ATCC BAA-2100 / JCM 16839 / KCTC 5957 / BAV1).